We begin with the raw amino-acid sequence, 271 residues long: 5-amino-6-(5-phospho-D-ribitylamino)uracil phosphatase YbjI (271 aa).

The Nucleophile role is filled by Asp9. Asp9 contacts Mg(2+). Position 10 (Met10) interacts with phosphate. Residue Asp11 coordinates Mg(2+). Phosphate-binding positions include 44 to 45 and Lys192; that span reads SG. Asp215 provides a ligand contact to Mg(2+). Asn218 serves as a coordination point for phosphate.

The protein belongs to the HAD-like hydrolase superfamily. Cof family. Mg(2+) serves as cofactor. Requires Mn(2+) as cofactor. Co(2+) is required as a cofactor. The cofactor is Zn(2+).

It catalyses the reaction 5-amino-6-(5-phospho-D-ribitylamino)uracil + H2O = 5-amino-6-(D-ribitylamino)uracil + phosphate. It functions in the pathway cofactor biosynthesis; riboflavin biosynthesis; 5-amino-6-(D-ribitylamino)uracil from GTP: step 4/4. Its function is as follows. Catalyzes the dephosphorylation of 5-amino-6-(5-phospho-D-ribitylamino)uracil, and thus could be involved in the riboflavin biosynthesis pathway. Is also able to dephosphorylate flavin mononucleotide (FMN), erythrose 4-phosphate and other phosphoric acid esters. This Escherichia coli (strain K12) protein is 5-amino-6-(5-phospho-D-ribitylamino)uracil phosphatase YbjI (ybjI).